The following is a 311-amino-acid chain: Probable cell division protein WhiA (311 aa).

A DNA-binding region (H-T-H motif) is located at residues 277–311; it reads TLKEVADQIPDGPISKSGVNHRFKKLHELAETLKE.

This sequence belongs to the WhiA family.

Functionally, involved in cell division and chromosome segregation. The polypeptide is Probable cell division protein WhiA (Lactobacillus helveticus (strain DPC 4571)).